The sequence spans 71 residues: Protein translocase subunit SecE (71 aa).

Residues 43–63 traverse the membrane as a helical segment; sequence VAGVGILAVGAIGFIIYVLLT.

Belongs to the SecE/SEC61-gamma family. In terms of assembly, component of the Sec protein translocase complex. Heterotrimer consisting of SecY (alpha), SecG (beta) and SecE (gamma) subunits. The heterotrimers can form oligomers, although 1 heterotrimer is thought to be able to translocate proteins. Interacts with the ribosome. May interact with SecDF, and other proteins may be involved.

It is found in the cell membrane. Essential subunit of the Sec protein translocation channel SecYEG. Clamps together the 2 halves of SecY. May contact the channel plug during translocation. This chain is Protein translocase subunit SecE, found in Methanosarcina barkeri (strain Fusaro / DSM 804).